Reading from the N-terminus, the 309-residue chain is MEKVLVFGHKNPDTDAICSAIAYAELKKELGMNAEPVRLGEISGETQFALDYFKVEGPRFVETVASEVDNVILVDHNERQQSANDIESVRVLEVIDHHRIANFETSDPIYYRCEPVGCTATILNKMYKENGVTIRKEVAGLMLSAIISDSLLFKSPTCTEQDVAAARELAQIAGVDADNYGLEMLKAGADLSGKTMEQLISLDAKEFQMGNAKVEIAQVNAVDTNDVLVHQAELEKVISAVVEEKGLDLFLFVVTDILTNDSVGLAIGKAANVVEKAYNVSLENNTATLKGVVSRKKQIVPVLTEAFQA.

Mn(2+) contacts are provided by His-9, Asp-13, Asp-15, Asp-75, His-97, and Asp-149.

Belongs to the PPase class C family. It depends on Mn(2+) as a cofactor.

The protein localises to the cytoplasm. The catalysed reaction is diphosphate + H2O = 2 phosphate + H(+). In Bacillus cereus (strain B4264), this protein is Probable manganese-dependent inorganic pyrophosphatase.